We begin with the raw amino-acid sequence, 237 residues long: Carbohydrate deacetylase (237 aa).

2 residues coordinate Mg(2+): histidine 59 and histidine 125.

The protein belongs to the YdjC deacetylase family. The cofactor is Mg(2+).

Its function is as follows. Probably catalyzes the deacetylation of acetylated carbohydrates an important step in the degradation of oligosaccharides. This is Carbohydrate deacetylase from Halalkalibacterium halodurans (strain ATCC BAA-125 / DSM 18197 / FERM 7344 / JCM 9153 / C-125) (Bacillus halodurans).